A 464-amino-acid chain; its full sequence is DNA repair protein KRE29 (464 aa).

Positions 1–69 (MGSVNSSPNE…SDEEFSSLEN (69 aa)) are disordered. A compositionally biased stretch (acidic residues) spans 53–65 (PENDSLNSDEEFS). S81 and S101 each carry phosphoserine.

Component of the Smc5-Smc6 complex which consists of KRE29, MMS21, NSE1, NSE3, NSE4, NSE5, SMC5 and SMC6. Interacts with NSE5.

The protein localises to the nucleus. Its subcellular location is the cytoplasm. Acts in a DNA repair pathway for removal of UV-induced DNA damage that is distinct from classical nucleotide excision repair and in repair of ionizing radiation damage. Functions in homologous recombination repair of DNA double strand breaks and in recovery of stalled replication forks. In Saccharomyces cerevisiae (strain ATCC 204508 / S288c) (Baker's yeast), this protein is DNA repair protein KRE29 (KRE29).